The primary structure comprises 375 residues: N-acetyldiaminopimelate deacetylase (375 aa).

Residue D69 is part of the active site. The active-site Proton acceptor is E128.

This sequence belongs to the peptidase M20A family. N-acetyldiaminopimelate deacetylase subfamily.

The catalysed reaction is N-acetyl-(2S,6S)-2,6-diaminopimelate + H2O = (2S,6S)-2,6-diaminopimelate + acetate. It participates in amino-acid biosynthesis; L-lysine biosynthesis via DAP pathway; LL-2,6-diaminopimelate from (S)-tetrahydrodipicolinate (acetylase route): step 3/3. In terms of biological role, catalyzes the conversion of N-acetyl-diaminopimelate to diaminopimelate and acetate. This is N-acetyldiaminopimelate deacetylase from Streptococcus suis (strain 05ZYH33).